The primary structure comprises 526 residues: WRKY transcription factor 72A (526 aa).

Composition is skewed to basic and acidic residues over residues 40 to 52 (KERK…DDNS) and 60 to 76 (LTGD…KADM). 2 disordered regions span residues 40–76 (KERK…KADM) and 170–200 (SSTK…QTWP). Residues 62–106 (GDKKDDQLESAKADMEEVMEENQRLKKHLDKIMKDYRNLQMQFHE) adopt a coiled-coil conformation. The segment covering 170–185 (SSTKSSPSNLSPENSL) has biased composition (low complexity). Positions 232–298 (CDTPTMNDGC…YEGTHNHPLP (67 aa)) form a DNA-binding region, WRKY.

It belongs to the WRKY group II-b family. Expressed in roots, trichomes and fruits.

The protein resides in the nucleus. Its function is as follows. Transcription activator involved in the transcriptional regulation of terpene biosynthesis in glandular trichomes. Binds to the promoter of the linalool synthase TPS5 and promotes TPS5 gene transactivation. In association with WRKY72B, contributes to basal defense against root-knot nematodes (RKNs) and potato aphids, as well as Mi-1-mediated gene-for-gene resistance to these pests. Both WRKY72A and WRKY72B are not required for gene-for-gene resistance mediated by Pto, another tomato R gene. This is WRKY transcription factor 72A from Solanum lycopersicum (Tomato).